The chain runs to 118 residues: EVQLQQSGPELVKPGASVKISCKASGYTFTDYYMNWVKQSHGKSLEWIGDINPNNGGTSYNQKFKGKATLTVDKSSSATYMELRSLTSEDSAVYYCARGYGYDPFDVWGTGTTVTVSS.

Residues 1–98 (EVQLQQSGPE…EDSAVYYCAR (98 aa)) form a v segment region. The cysteines at positions 22 and 96 are disulfide-linked. The segment at 99-104 (GYGYDP) is d segment. Positions 105-118 (FDVWGTGTTVTVSS) are j segment.

The protein is Ig heavy chain V region AC38 205.12 of Mus musculus (Mouse).